Consider the following 291-residue polypeptide: Bifunctional protein FolD (291 aa).

NADP(+) is bound by residues 168-170 (GRG), Thr-195, and Ile-236.

It belongs to the tetrahydrofolate dehydrogenase/cyclohydrolase family. Homodimer.

It carries out the reaction (6R)-5,10-methylene-5,6,7,8-tetrahydrofolate + NADP(+) = (6R)-5,10-methenyltetrahydrofolate + NADPH. The catalysed reaction is (6R)-5,10-methenyltetrahydrofolate + H2O = (6R)-10-formyltetrahydrofolate + H(+). It functions in the pathway one-carbon metabolism; tetrahydrofolate interconversion. Its function is as follows. Catalyzes the oxidation of 5,10-methylenetetrahydrofolate to 5,10-methenyltetrahydrofolate and then the hydrolysis of 5,10-methenyltetrahydrofolate to 10-formyltetrahydrofolate. In Bifidobacterium longum subsp. infantis (strain ATCC 15697 / DSM 20088 / JCM 1222 / NCTC 11817 / S12), this protein is Bifunctional protein FolD.